The primary structure comprises 241 residues: DNA repair protein RecO (241 aa).

The protein belongs to the RecO family.

Functionally, involved in DNA repair and RecF pathway recombination. This Rickettsia bellii (strain OSU 85-389) protein is DNA repair protein RecO.